The primary structure comprises 530 residues: Pre-mRNA-splicing factor PRP9 (530 aa).

The segment at 280–310 (IYCPFCSRWFKTSSVFESHLVGKIHKKNESK) adopts a Matrin-type 1 zinc-finger fold. Positions 367–388 (DSTEKEGAEQVDGEQRDGQLQE) are disordered. Residues 368 to 388 (STEKEGAEQVDGEQRDGQLQE) are compositionally biased toward basic and acidic residues. The Matrin-type 2 zinc-finger motif lies at 421 to 452 (YRCEICSNKVYNGRRTFERHFNEERHIYHLRC). The tract at residues 488 to 516 (AVPPKPNPSQLKVPTELELEEEDEEGNVM) is disordered. Residues 504-513 (LELEEEDEEG) show a composition bias toward acidic residues.

It belongs to the SF3A3 family. Belongs to the CWC complex (or CEF1-associated complex), a spliceosome sub-complex reminiscent of a late-stage spliceosome composed of the U2, U5 and U6 snRNAs and at least BUD13, BUD31, BRR2, CDC40, CEF1, CLF1, CUS1, CWC2, CWC15, CWC21, CWC22, CWC23, CWC24, CWC25, CWC27, ECM2, HSH155, IST3, ISY1, LEA1, MSL1, NTC20, PRP8, PRP9, PRP11, PRP19, PRP21, PRP22, PRP45, PRP46, SLU7, SMB1, SMD1, SMD2, SMD3, SMX2, SMX3, SNT309, SNU114, SPP2, SYF1, SYF2, RSE1 and YJU2.

Its subcellular location is the nucleus. Functionally, mRNA splicing factors, PRP9, PRP11, and PRP21, are necessary for binding of the U2 snRNP to the pre-mRNA in an early step of spliceosome assembly. The polypeptide is Pre-mRNA-splicing factor PRP9 (PRP9) (Saccharomyces cerevisiae (strain ATCC 204508 / S288c) (Baker's yeast)).